The following is a 279-amino-acid chain: Ribosomal RNA small subunit methyltransferase I (279 aa).

Belongs to the methyltransferase superfamily. RsmI family.

The protein localises to the cytoplasm. The catalysed reaction is cytidine(1402) in 16S rRNA + S-adenosyl-L-methionine = 2'-O-methylcytidine(1402) in 16S rRNA + S-adenosyl-L-homocysteine + H(+). Its function is as follows. Catalyzes the 2'-O-methylation of the ribose of cytidine 1402 (C1402) in 16S rRNA. This chain is Ribosomal RNA small subunit methyltransferase I, found in Synechocystis sp. (strain ATCC 27184 / PCC 6803 / Kazusa).